The sequence spans 173 residues: Bifunctional protein PyrR (173 aa).

The PRPP-binding motif lies at 93-105; that stretch reads IILVDDVLYTGRT.

Belongs to the purine/pyrimidine phosphoribosyltransferase family. PyrR subfamily. In terms of assembly, homodimer and homohexamer; in equilibrium.

It carries out the reaction UMP + diphosphate = 5-phospho-alpha-D-ribose 1-diphosphate + uracil. Regulates transcriptional attenuation of the pyrimidine nucleotide (pyr) operon by binding in a uridine-dependent manner to specific sites on pyr mRNA. This disrupts an antiterminator hairpin in the RNA and favors formation of a downstream transcription terminator, leading to a reduced expression of downstream genes. In terms of biological role, also displays a weak uracil phosphoribosyltransferase activity which is not physiologically significant. This is Bifunctional protein PyrR from Streptococcus equi subsp. zooepidemicus (strain MGCS10565).